The primary structure comprises 340 residues: N-acetyl-gamma-glutamyl-phosphate reductase (340 aa).

The active site involves Cys-146.

The protein belongs to the NAGSA dehydrogenase family. Type 1 subfamily.

The protein resides in the cytoplasm. The catalysed reaction is N-acetyl-L-glutamate 5-semialdehyde + phosphate + NADP(+) = N-acetyl-L-glutamyl 5-phosphate + NADPH + H(+). It functions in the pathway amino-acid biosynthesis; L-arginine biosynthesis; N(2)-acetyl-L-ornithine from L-glutamate: step 3/4. In terms of biological role, catalyzes the NADPH-dependent reduction of N-acetyl-5-glutamyl phosphate to yield N-acetyl-L-glutamate 5-semialdehyde. This is N-acetyl-gamma-glutamyl-phosphate reductase from Rubrobacter xylanophilus (strain DSM 9941 / JCM 11954 / NBRC 16129 / PRD-1).